We begin with the raw amino-acid sequence, 366 residues long: MELAEIRNELEKTAQQIKDFRGSLDLDSMEVRIAELEDQMLDPNFWNDQQAAQKVINESNGYKETYQAFHALEEEQESMEISLELLKEEADEDLQEELEKDIKAYMATISEFELKLMLSDPYDKNNAILELHPGAGGTESQDWGSMLLRMYQRWSEKKGFKVEMLDYQAGDEAGIKSVTLLIKGHNAYGYLKAEKGVHRLVRISPFDSSGRRHTSFVSVDVMPELDDDIEIEVRTEDLKIDTYRATGAGGQHINTTDSAVRMTHIPSGIVVTCQSERSQLKNREQAMKMLKTKLYQKEQEEKERELAEIRGEQKEIGWGSQIRSYVFHPYSMVKDHRTNYETGNIQAVMDGDLDEFINAYLRSRIG.

Glutamine 251 is subject to N5-methylglutamine.

It belongs to the prokaryotic/mitochondrial release factor family. In terms of processing, methylated by PrmC. Methylation increases the termination efficiency of RF2.

The protein resides in the cytoplasm. Its function is as follows. Peptide chain release factor 2 directs the termination of translation in response to the peptide chain termination codons UGA and UAA. The polypeptide is Peptide chain release factor 2 (prfB) (Listeria monocytogenes serotype 4b (strain F2365)).